Reading from the N-terminus, the 586-residue chain is NudC domain-containing protein 1 (586 aa).

The region spanning 275 to 364 (KREPLYNWQQ…EPGCTWAELV (90 aa)) is the CS domain.

It is found in the cytoplasm. The protein resides in the nucleus. This chain is NudC domain-containing protein 1, found in Xenopus laevis (African clawed frog).